Consider the following 604-residue polypeptide: Netrin-1 (604 aa).

Residues 1 to 24 form the signal peptide; the sequence is MMRAVWEALAALAAVACLVGAVRG. The 238-residue stretch at 47–284 folds into the Laminin N-terminal domain; the sequence is HPRRCIPDFV…AVSDLQVGGR (238 aa). N-linked (GlcNAc...) asparagine glycans are attached at residues Asn95, Asn116, and Asn131. Disulfide bonds link Cys119/Cys152, Cys285/Cys294, Cys287/Cys304, Cys306/Cys315, Cys318/Cys338, Cys341/Cys350, Cys343/Cys368, Cys371/Cys380, Cys383/Cys401, Cys404/Cys416, Cys406/Cys423, Cys425/Cys434, Cys437/Cys451, Cys472/Cys544, and Cys491/Cys601. 3 consecutive Laminin EGF-like domains span residues 285 to 340, 341 to 403, and 404 to 453; these read CKCN…ECVA, CNCN…ACKA, and CDCH…PCIK. Asn417 is a glycosylation site (N-linked (GlcNAc...) asparagine). Positions 472-601 constitute an NTR domain; sequence CDSYCKASKG…FQQREKKGKC (130 aa). The Cell attachment site motif lies at 530–532; the sequence is RGD.

Binds to its receptors; DCC, UNC5A, UNC5B, UNC5C and probably UNC5D. Binds to its receptor; DSCAM. Interacts with APP. As to expression, in the embryo, widely expressed in the developing nervous system and in mesodermal tissues.

It localises to the secreted. It is found in the cytoplasm. In terms of biological role, netrins control guidance of CNS commissural axons and peripheral motor axons. Its association with either DCC or some UNC5 receptors will lead to axon attraction or repulsion, respectively. Binding to UNC5C might cause dissociation of UNC5C from polymerized TUBB3 in microtubules and thereby lead to increased microtubule dynamics and axon repulsion. Involved in dorsal root ganglion axon projection towards the spinal cord. It also serves as a survival factor via its association with its receptors which prevent the initiation of apoptosis. Involved in colorectal tumorigenesis by regulating apoptosis. The polypeptide is Netrin-1 (Ntn1) (Mus musculus (Mouse)).